The sequence spans 633 residues: Carbon catabolite-derepressing protein kinase (633 aa).

A compositionally biased stretch (low complexity) spans 1–16 (MSSNNNTNTAPANANS). The tract at residues 1–46 (MSSNNNTNTAPANANSSHHHHHHHHHHHHHGHGGSNSTLNNPKSSL) is disordered. Residues 17 to 32 (SHHHHHHHHHHHHHGH) are compositionally biased toward basic residues. The Protein kinase domain maps to 55–306 (YQIVKTLGEG…IHEIMQDDWF (252 aa)). Residues 61 to 69 (LGEGSFGKV) and K84 contribute to the ATP site. The active-site Proton acceptor is the D177. Residue T210 is modified to Phosphothreonine; by autocatalysis. An auto-inhibitory domain (AID) region spans residues 313–392 (YLLPPDLKPH…YMLIKENKSL (80 aa)). A disordered region spans residues 317-345 (PDLKPHPEEENENNDSKKDGSSPDNDEID). The segment covering 319–337 (LKPHPEEENENNDSKKDGS) has biased composition (basic and acidic residues). One can recognise a UBA domain in the interval 348–389 (LVNILSSTMGYEKDEIYESLESSEDTPAFNEIRDAYMLIKEN). Positions 409 to 434 (FLSQSPPTFQQQSKSHQKSQVDHETA) are disordered. S413 is modified (phosphoserine). K461 is covalently cross-linked (Glycyl lysine isopeptide (Lys-Gly) (interchain with G-Cter in ubiquitin)). Phosphoserine is present on S487. K549 participates in a covalent cross-link: Glycyl lysine isopeptide (Lys-Gly) (interchain with G-Cter in SUMO). S632 is subject to Phosphoserine.

This sequence belongs to the protein kinase superfamily. CAMK Ser/Thr protein kinase family. SNF1 subfamily. In terms of assembly, component of the AMP-activated protein kinase complex also known as the SNF1 kinase complex (Snf1c), a heterotrimeric complex composed of an alpha subunit (SNF1), a regulatory subunit beta (GAL83 and substoichiometric alternate beta subunits SIP1 and SIP2), and a regulatory subunit gamma (SNF4). Interacts with the transcriptional activator SIP4. Interacts with SAK1. Interacts with CTK1: Interacts with adenylate cyclase CYR1. Phosphorylation at Thr-210 in response to glucose limitation leads to activation of kinase activity. ADP, but not AMP, protects the enzyme from dephosphorylation at Thr-210 by GLC7. Post-translationally, sumoylation by the SUMO (E3) ligase MMS21 leads to inhibition by interaction of SUMO attached to Lys-549 with a SUMO-interacting sequence motif located near the active site of SNF1, and by targeting SNF1 for glucose-induced destruction via the SLX5-SLX8 (SUMO-directed) ubiquitin ligase.

The protein resides in the cytoplasm. The protein localises to the nucleus. It is found in the nucleus membrane. It catalyses the reaction L-seryl-[protein] + ATP = O-phospho-L-seryl-[protein] + ADP + H(+). The enzyme catalyses L-threonyl-[protein] + ATP = O-phospho-L-threonyl-[protein] + ADP + H(+). With respect to regulation, the kinase activity is positively regulated by SNF4 via sequestration of the SNF1 auto-inhibitory domain (AID). In terms of biological role, serine/threonine protein kinase essential for release from glucose repression. Catalytic subunit of the AMP-activated protein kinase complex also known as the SNF1 kinase complex (Snf1c), a central regulator of cellular energy homeostasis, which, in response to a fall in intracellular ATP levels, activates energy-producing pathways and inhibits energy-consuming processes. The complex phosphorylates histone H3 to form H3S10ph, which promotes H3K14ac formation, leading to transcriptional activation through TBP recruitment to the promoters. The complex also negatively regulates the HOG1 MAPK pathway in ER stress response including unfolded protein response (UPR). Under nutrient/energy depletion, the complex phosphorylates and activates PAS kinase PSK1 which in turn activates PBS1, leading to the inhibition of the TORC1 signaling pathway. SNF1 also interacts and phosphorylates adenylate cyclase CYR1 and negatively regulates the protein kinase A signaling pathway. Also phosphorylates and regulates the transcriptional activator CAT8. This is Carbon catabolite-derepressing protein kinase from Saccharomyces cerevisiae (strain ATCC 204508 / S288c) (Baker's yeast).